A 483-amino-acid chain; its full sequence is Glutamyl-tRNA(Gln) amidotransferase subunit A (483 aa).

Active-site charge relay system residues include lysine 76 and serine 151. The Acyl-ester intermediate role is filled by serine 175.

The protein belongs to the amidase family. GatA subfamily. As to quaternary structure, heterotrimer of A, B and C subunits.

The enzyme catalyses L-glutamyl-tRNA(Gln) + L-glutamine + ATP + H2O = L-glutaminyl-tRNA(Gln) + L-glutamate + ADP + phosphate + H(+). Allows the formation of correctly charged Gln-tRNA(Gln) through the transamidation of misacylated Glu-tRNA(Gln) in organisms which lack glutaminyl-tRNA synthetase. The reaction takes place in the presence of glutamine and ATP through an activated gamma-phospho-Glu-tRNA(Gln). This Pseudomonas fluorescens (strain ATCC BAA-477 / NRRL B-23932 / Pf-5) protein is Glutamyl-tRNA(Gln) amidotransferase subunit A.